Here is a 713-residue protein sequence, read N- to C-terminus: Glutamine--fructose-6-phosphate aminotransferase [isomerizing] (713 aa).

The active-site For GATase activity is the cysteine 2. The Glutamine amidotransferase type-2 domain maps to 2-316 (CGIFGYVNFL…DDDIAHIYDG (315 aa)). SIS domains follow at residues 389–528 (WLST…DSIS) and 561–703 (CNSS…VDFP).

Homotetramer.

The enzyme catalyses D-fructose 6-phosphate + L-glutamine = D-glucosamine 6-phosphate + L-glutamate. The protein operates within nucleotide-sugar biosynthesis; UDP-N-acetyl-alpha-D-glucosamine biosynthesis; alpha-D-glucosamine 6-phosphate from D-fructose 6-phosphate: step 1/1. Involved in amino sugar synthesis (formation of chitin, supplies the amino sugars of asparagine-linked oligosaccharides of glycoproteins). The polypeptide is Glutamine--fructose-6-phosphate aminotransferase [isomerizing] (GFA1) (Candida albicans (strain SC5314 / ATCC MYA-2876) (Yeast)).